The primary structure comprises 572 residues: MLLLWPLLFLQVSALRRTLFDRPKQLMQEGRVRLVGVIPSSGRVEVYHDGQWGTVCDDGWDLAEAQVVCRQLGFPGAVSVATGGQYGEGSGRVWLDDMNCKGSESLLSECSFKGWGVSDCTHKEDAGVICAPGKNTTSIRQMSVDNSLGLSDDLGLLFDSEDGCDFTIAVRDLSEEAELTFCVHRVILMIYPELNLTHDTRNITVDISQTCHTHVPRFLRYLYTRQIDVSTTSAQCLHQLAFIFGVQKLMEDVGRVFTALIPEDNTFQTQVSMYEYGVRTGDLVLQENVLQYLSWNCEFLISSPVWSTVSFDMMDALLQRSDLIVKDEAVLLEALERWIQDKGDQISSDKQVSLLNHIRFLLIPVDKLYDIQFSSSALRQSNEKLYLTGLLRGFQFNALPFSKIRDQVVKLSGNYIPRIYIGDEWSLGLNVSTVNNPHYNPYQYGYDQRYGQSNRIEKYLSTPAHPSAVYRGQMIQWQAQVFRSVQDCRNSGISCNSVPLVRFLATSSQYSYSSTIRYNNRLVLTCKNQNNVFHVQDFKNNMAVIPTNSSMGLPNPCPDDYSFRFVVRPQYI.

A signal peptide spans 1-14; it reads MLLLWPLLFLQVSA. One can recognise an SRCR domain in the interval 32-131; that stretch reads VRLVGVIPSS…HKEDAGVICA (100 aa). 3 disulfides stabilise this stretch: Cys56-Cys120, Cys69-Cys130, and Cys100-Cys110. N-linked (GlcNAc...) asparagine glycosylation is found at Asn135, Asn195, and Asn202. The region spanning 164-231 is the BTB domain; it reads CDFTIAVRDL…LYTRQIDVST (68 aa). One can recognise a BACK domain in the interval 270 to 372; sequence QVSMYEYGVR…IPVDKLYDIQ (103 aa). Asn430 and Asn548 each carry an N-linked (GlcNAc...) asparagine glycan.

It localises to the secreted. It is found in the extracellular space. Its subcellular location is the extracellular matrix. Functionally, promotes integrin-mediated cell adhesion. This Danio rerio (Zebrafish) protein is Galectin-3-binding protein B (lgals3bpb).